Here is a 182-residue protein sequence, read N- to C-terminus: Large ribosomal subunit protein uL6 (182 aa).

This sequence belongs to the universal ribosomal protein uL6 family. Part of the 50S ribosomal subunit.

Its function is as follows. This protein binds to the 23S rRNA, and is important in its secondary structure. It is located near the subunit interface in the base of the L7/L12 stalk, and near the tRNA binding site of the peptidyltransferase center. The polypeptide is Large ribosomal subunit protein uL6 (Methanococcus maripaludis (strain C7 / ATCC BAA-1331)).